We begin with the raw amino-acid sequence, 150 residues long: UPF0208 membrane protein VV1_2222 (150 aa).

Helical transmembrane passes span 42–62 and 70–90; these read FGIKVMPAIAAISVLTQMAFN and AIVMALFALSLPLQGMWWLGH.

This sequence belongs to the UPF0208 family.

The protein resides in the cell inner membrane. The chain is UPF0208 membrane protein VV1_2222 from Vibrio vulnificus (strain CMCP6).